Here is a 209-residue protein sequence, read N- to C-terminus: Large ribosomal subunit protein bL25 (209 aa).

The interval 188–209 is disordered; it reads STSMEKEGEGSQEPTAAPSSEN. The span at 199-209 shows a compositional bias: polar residues; the sequence is QEPTAAPSSEN.

Belongs to the bacterial ribosomal protein bL25 family. CTC subfamily. Part of the 50S ribosomal subunit; part of the 5S rRNA/L5/L18/L25 subcomplex. Contacts the 5S rRNA. Binds to the 5S rRNA independently of L5 and L18.

This is one of the proteins that binds to the 5S RNA in the ribosome where it forms part of the central protuberance. This chain is Large ribosomal subunit protein bL25, found in Ehrlichia canis (strain Jake).